The primary structure comprises 464 residues: RCC1-like G exchanging factor-like protein (464 aa).

The N-terminal 37 residues, 1–37, are a transit peptide targeting the mitochondrion; it reads MALVALVAGARLGRRLSGPGLGRGHWTAAGRSRSRRE. 7 RCC1 repeats span residues 58–124, 128–191, 193–247, 248–300, 302–353, 354–411, and 412–461; these read ADRV…LSSK, VTKV…VLTD, EGVF…FLTD, KGEV…AVSA, GGLF…VLNG, EGHV…ALTN, and KGEL…TLAK.

In terms of assembly, forms a regulatory protein-RNA complex, consisting of RCC1L, NGRN, RPUSD3, RPUSD4, TRUB2, FASTKD2 and 16S mt-rRNA. Interacts with 16S mt-rRNA; this interaction is direct. Interacts with OPA1; this interaction is direct. As to quaternary structure, asociates with the mitochondrial ribosome large subunit (mt-LSU). Asociates with the mitochondrial ribosome small subunit (mt-SSU). As to expression, ubiquitous.

The protein resides in the mitochondrion membrane. Its subcellular location is the mitochondrion inner membrane. Its function is as follows. Guanine nucleotide exchange factor (GEF) for mitochondrial dynamin-related GTPase OPA1. Activates OPA1, by exchanging bound GDP for free GTP, and drives OPA1 and MFN1-dependent mitochondrial fusion. Plays an essential role in mitochondrial ribosome biogenesis. As a component of a functional protein-RNA module, consisting of RCC1L, NGRN, RPUSD3, RPUSD4, TRUB2, FASTKD2 and 16S mitochondrial ribosomal RNA (16S mt-rRNA), controls 16S mt-rRNA abundance and is required for intra-mitochondrial translation of core subunits of the oxidative phosphorylation system. Plays an essential role in mitochondrial ribosome biogenesis via its association with GTPases that play a role in the assembly of the large ribosome subunit. In terms of biological role, plays an essential role in mitochondrial ribosome biogenesis via its association with GTPases that play a role in the assembly of the small ribosome subunit. In Homo sapiens (Human), this protein is RCC1-like G exchanging factor-like protein.